The chain runs to 253 residues: MADRADKAARSSVDPGEIARFSAMAAEWWDPAGKFRPLHKFNPTRLSYIRERTSAHFGLDARAVRPFEDLRFLDIGCGGGLLSEPMARLGAAMVSADASEQNIKTASVHAAEQGLGIDYRCTTAEALAAAGETFDVILNMEVIEHVADPMAFLKDCASMLRPGGLMFIATLNRTLKAHAFAIVGAEYVLGWLPRGTHDWKKFITVNEMETGIADAGLRLKELTGVSYNPLTDKWSLSRDTDVNYMALAERARD.

Positions 45, 76, 97, and 140 each coordinate S-adenosyl-L-methionine.

It belongs to the methyltransferase superfamily. UbiG/COQ3 family.

The catalysed reaction is a 3-demethylubiquinol + S-adenosyl-L-methionine = a ubiquinol + S-adenosyl-L-homocysteine + H(+). The enzyme catalyses a 3-(all-trans-polyprenyl)benzene-1,2-diol + S-adenosyl-L-methionine = a 2-methoxy-6-(all-trans-polyprenyl)phenol + S-adenosyl-L-homocysteine + H(+). Its pathway is cofactor biosynthesis; ubiquinone biosynthesis. Its function is as follows. O-methyltransferase that catalyzes the 2 O-methylation steps in the ubiquinone biosynthetic pathway. The polypeptide is Ubiquinone biosynthesis O-methyltransferase (Parvibaculum lavamentivorans (strain DS-1 / DSM 13023 / NCIMB 13966)).